Consider the following 65-residue polypeptide: Defensin-B2 (65 aa).

Residues 1–23 (MEARVLLLCAVLFLLVHTPPAAG) form the signal peptide. 3 disulfides stabilise this stretch: cysteine 29/cysteine 56, cysteine 36/cysteine 50, and cysteine 40/cysteine 57.

This sequence belongs to the beta-defensin family. As to expression, lowly expressed in spleen, and lung.

It localises to the secreted. Functionally, has antimicrobial activity. The protein is Defensin-B2 of Ornithorhynchus anatinus (Duckbill platypus).